A 1014-amino-acid polypeptide reads, in one-letter code: Endogenous retrovirus group K member 10 Pol protein (1014 aa).

One can recognise a Reverse transcriptase domain in the interval 57 to 245 (LEKGHIEPSF…TPFHYLGMQI (189 aa)). Positions 161 to 164 (LPQG) match the LPQG motif. The YXDD signature appears at 195–198 (YIDD). One can recognise an RNase H type-1 domain in the interval 460–590 (LENALTVFTD…ADLLVSSALI (131 aa)). Residues aspartate 469, glutamate 497, aspartate 517, and aspartate 582 each contribute to the Mg(2+) site. The segment at 587-628 (SALIKAQELHALTHVNAAGLKNKFDVTWKQAKDIVQHCTQCQ) adopts an Integrase-type zinc-finger fold. Zn(2+) contacts are provided by histidine 596, histidine 600, cysteine 624, and cysteine 627. An Integrase catalytic domain is found at 642-803 (RGLCPNALWQ…TSAEQHLTGK (162 aa)). Positions 811–859 (KLIWWKDNKNKTWEIGKVITWGRGFACVSPGENQLPVWLPTRHLKFYNE) form a DNA-binding region, integrase-type.

It belongs to the beta type-B retroviral polymerase family. HERV class-II K(HML-2) pol subfamily.

It carries out the reaction DNA(n) + a 2'-deoxyribonucleoside 5'-triphosphate = DNA(n+1) + diphosphate. It catalyses the reaction Endonucleolytic cleavage to 5'-phosphomonoester.. In terms of biological role, early post-infection, the reverse transcriptase converts the viral RNA genome into double-stranded viral DNA. The RNase H domain of the reverse transcriptase performs two functions. It degrades the RNA template and specifically removes the RNA primer from the RNA/DNA hybrid. Following nuclear import, the integrase catalyzes the insertion of the linear, double-stranded viral DNA into the host cell chromosome. Endogenous Pol proteins may have kept, lost or modified their original function during evolution. In Homo sapiens (Human), this protein is Endogenous retrovirus group K member 10 Pol protein (ERVK-10).